The following is a 67-amino-acid chain: Conotoxin TsMMSK-011 (67 aa).

An N-terminal signal peptide occupies residues 1–20 (MMSKLGVLLTICLLLFPLTA). Positions 21 to 50 (VQLDGDQPADLPALRTQDISTDHSPWFDPV) are excised as a propeptide. 3 disulfide bridges follow: Cys-53–Cys-65, Cys-54–Cys-61, and Cys-58–Cys-64. Pro-63 carries the 4-hydroxyproline modification.

It belongs to the conotoxin M superfamily. As to expression, expressed by the venom duct.

It is found in the secreted. The protein is Conotoxin TsMMSK-011 of Conus tessulatus (Tessellate cone).